A 367-amino-acid polypeptide reads, in one-letter code: 3-methyl-2-oxobutanoate dehydrogenase subunit alpha (367 aa).

Thiamine diphosphate-binding positions include 99 to 101, 141 to 142, 170 to 176, 200 to 204, and His-269; these read QYR, PI, GDGATSE, and NQWAI. Tyr-100 contributes to the substrate binding site. Asp-171 and Asn-200 together coordinate Mg(2+).

As to quaternary structure, heteromer of E1 alpha (BkdA) and beta (BkdB) subunits. Part of the BCKADH complex, consisting of multiple copies of BkdA/BkdB (E1), BkdC (E2) and Lpd (E3). Requires Mg(2+) as cofactor. It depends on thiamine diphosphate as a cofactor.

It carries out the reaction N(6)-[(R)-lipoyl]-L-lysyl-[protein] + 3-methyl-2-oxobutanoate + H(+) = N(6)-[(R)-S(8)-2-methylpropanoyldihydrolipoyl]-L-lysyl-[protein] + CO2. Component of the branched-chain alpha-ketoacid dehydrogenase (BCKADH) complex, that catalyzes the overall conversion of branched-chain alpha-ketoacids to acyl-CoA and CO(2). The polypeptide is 3-methyl-2-oxobutanoate dehydrogenase subunit alpha (bkdA) (Mycobacterium tuberculosis (strain CDC 1551 / Oshkosh)).